Reading from the N-terminus, the 264-residue chain is uncharacterized protein (264 aa).

3 helical membrane passes run 48-68 (LTIT…LLVF), 112-132 (ITPS…FLLA), and 142-162 (LPIA…SYLI). S260 is modified (phosphoserine).

It localises to the membrane. This is an uncharacterized protein from Schizosaccharomyces pombe (strain 972 / ATCC 24843) (Fission yeast).